Reading from the N-terminus, the 453-residue chain is Glutamyl-tRNA(Gln) amidotransferase subunit A (453 aa).

Residues Lys56 and Ser131 each act as charge relay system in the active site. The active-site Acyl-ester intermediate is Ser155.

Belongs to the amidase family. GatA subfamily. As to quaternary structure, heterotrimer of A, B and C subunits.

The catalysed reaction is L-glutamyl-tRNA(Gln) + L-glutamine + ATP + H2O = L-glutaminyl-tRNA(Gln) + L-glutamate + ADP + phosphate + H(+). Its function is as follows. Allows the formation of correctly charged Gln-tRNA(Gln) through the transamidation of misacylated Glu-tRNA(Gln) in organisms which lack glutaminyl-tRNA synthetase. The reaction takes place in the presence of glutamine and ATP through an activated gamma-phospho-Glu-tRNA(Gln). The protein is Glutamyl-tRNA(Gln) amidotransferase subunit A of Campylobacter jejuni (strain RM1221).